A 551-amino-acid polypeptide reads, in one-letter code: Small ribosomal subunit protein bS1 (551 aa).

6 consecutive S1 motif domains span residues 21 to 83 (GALV…LSRE), 101 to 167 (GEMV…VSRR), 188 to 256 (GQEI…LGMK), 273 to 343 (NSRV…LGIK), 360 to 430 (DEKI…LGIK), and 447 to 516 (DAVI…VSHK).

This sequence belongs to the bacterial ribosomal protein bS1 family.

In terms of biological role, binds mRNA; thus facilitating recognition of the initiation point. It is needed to translate mRNA with a short Shine-Dalgarno (SD) purine-rich sequence. The sequence is that of Small ribosomal subunit protein bS1 (rpsA) from Coxiella burnetii (strain RSA 493 / Nine Mile phase I).